Here is a 372-residue protein sequence, read N- to C-terminus: 4-hydroxy-3-methylbut-2-en-1-yl diphosphate synthase (flavodoxin) (372 aa).

4 residues coordinate [4Fe-4S] cluster: C270, C273, C305, and E312.

The protein belongs to the IspG family. [4Fe-4S] cluster is required as a cofactor.

The catalysed reaction is (2E)-4-hydroxy-3-methylbut-2-enyl diphosphate + oxidized [flavodoxin] + H2O + 2 H(+) = 2-C-methyl-D-erythritol 2,4-cyclic diphosphate + reduced [flavodoxin]. The protein operates within isoprenoid biosynthesis; isopentenyl diphosphate biosynthesis via DXP pathway; isopentenyl diphosphate from 1-deoxy-D-xylulose 5-phosphate: step 5/6. Its function is as follows. Converts 2C-methyl-D-erythritol 2,4-cyclodiphosphate (ME-2,4cPP) into 1-hydroxy-2-methyl-2-(E)-butenyl 4-diphosphate. In Salmonella gallinarum (strain 287/91 / NCTC 13346), this protein is 4-hydroxy-3-methylbut-2-en-1-yl diphosphate synthase (flavodoxin).